Reading from the N-terminus, the 554-residue chain is Hydroxylamine reductase (554 aa).

[2Fe-2S] cluster-binding residues include cysteine 3, cysteine 6, cysteine 18, and cysteine 25. Hybrid [4Fe-2O-2S] cluster contacts are provided by histidine 252, glutamate 276, cysteine 320, cysteine 408, cysteine 436, cysteine 461, glutamate 495, and lysine 497. Cysteine 408 carries the post-translational modification Cysteine persulfide.

Belongs to the HCP family. The cofactor is [2Fe-2S] cluster. Requires hybrid [4Fe-2O-2S] cluster as cofactor.

The protein localises to the cytoplasm. The enzyme catalyses A + NH4(+) + H2O = hydroxylamine + AH2 + H(+). In terms of biological role, catalyzes the reduction of hydroxylamine to form NH(3) and H(2)O. In Shewanella pealeana (strain ATCC 700345 / ANG-SQ1), this protein is Hydroxylamine reductase.